A 469-amino-acid chain; its full sequence is tRNA (cytosine(72)-C(5))-methyltransferase NSUN6 (469 aa).

The PUA domain occupies 111 to 203; sequence QCEAIVGAQC…MGIRMTEPVY (93 aa). Residues 242-248, D266, D293, and D323 each bind S-adenosyl-L-methionine; that span reads CAAPGGK. C373 functions as the Nucleophile in the catalytic mechanism. K419 is subject to N6-acetyllysine.

It belongs to the class I-like SAM-binding methyltransferase superfamily. RsmB/NOP family.

It is found in the cytoplasm. It carries out the reaction cytidine(72) in tRNA(Thr) + S-adenosyl-L-methionine = 5-methylcytidine(72) in tRNA(Thr) + S-adenosyl-L-homocysteine + H(+). The catalysed reaction is cytidine(72) in tRNA(Cys) + S-adenosyl-L-methionine = 5-methylcytidine(72) in tRNA(Cys) + S-adenosyl-L-homocysteine + H(+). Functionally, S-adenosyl-L-methionine-dependent methyltransferase that specifically methylates the C5 position of cytosine 72 in tRNA(Thr)(TGT) and tRNA(Cys)(GCA). In vitro also methylates tRNA(Thr)(AGT). Methylation requires, in the acceptor stem region, the presence of the 3'-CCA terminus, the target site C72, the discriminator base U73, and the second and third base pairs (2:71 and 3:70) in the tRNA substrates. This chain is tRNA (cytosine(72)-C(5))-methyltransferase NSUN6, found in Homo sapiens (Human).